We begin with the raw amino-acid sequence, 273 residues long: Pyridoxal phosphate homeostasis protein (273 aa).

The residue at position 6 (Ser-6) is a Phosphoserine. Lys-47 carries the post-translational modification N6-(pyridoxal phosphate)lysine. Tyr-69 carries the phosphotyrosine modification. Lys-125 carries the post-translational modification N6-succinyllysine. Residues Ser-226 and Ser-244 each carry the phosphoserine modification. Residues 251–260 show a composition bias toward basic and acidic residues; it reads DYSKKTDKPA. Positions 251–273 are disordered; sequence DYSKKTDKPAAELQAPEEVAQAH.

This sequence belongs to the pyridoxal phosphate-binding protein YggS/PROSC family.

In terms of biological role, pyridoxal 5'-phosphate (PLP)-binding protein, which may be involved in intracellular homeostatic regulation of pyridoxal 5'-phosphate (PLP), the active form of vitamin B6. The sequence is that of Pyridoxal phosphate homeostasis protein from Bos taurus (Bovine).